Here is a 156-residue protein sequence, read N- to C-terminus: Small ribosomal subunit protein uS7 (156 aa).

Belongs to the universal ribosomal protein uS7 family. In terms of assembly, part of the 30S ribosomal subunit. Contacts proteins S9 and S11.

One of the primary rRNA binding proteins, it binds directly to 16S rRNA where it nucleates assembly of the head domain of the 30S subunit. Is located at the subunit interface close to the decoding center, probably blocks exit of the E-site tRNA. The polypeptide is Small ribosomal subunit protein uS7 (Rhizobium meliloti (strain 1021) (Ensifer meliloti)).